We begin with the raw amino-acid sequence, 806 residues long: ATP-dependent zinc metalloprotease FTSH 9, chloroplastic (806 aa).

The transit peptide at 1-62 (MTSIELLSPL…SSIQLPQSVP (62 aa)) directs the protein to the chloroplast. The segment at 84–116 (SSRTIVNCQEGDQKASSSEGEGKTNKDKGRKQG) is disordered. Helical transmembrane passes span 133-153 (IIQA…MFVV) and 271-291 (GGFF…AGLL). 369–376 (GLPGTGKT) provides a ligand contact to ATP. Residue histidine 594 coordinates Zn(2+). Residue glutamate 595 is part of the active site. Zn(2+) contacts are provided by histidine 598 and aspartate 677.

In the N-terminal section; belongs to the AAA ATPase family. This sequence in the C-terminal section; belongs to the peptidase M41 family. Zn(2+) is required as a cofactor.

Its subcellular location is the plastid. The protein resides in the chloroplast thylakoid membrane. Its function is as follows. Probable ATP-dependent zinc metallopeptidase. The polypeptide is ATP-dependent zinc metalloprotease FTSH 9, chloroplastic (FTSH9) (Arabidopsis thaliana (Mouse-ear cress)).